The sequence spans 326 residues: GTP cyclohydrolase MptA (326 aa).

The protein belongs to the GTP cyclohydrolase IV family. In terms of assembly, homodimer. Fe(2+) is required as a cofactor.

It carries out the reaction GTP + H2O = 7,8-dihydroneopterin 2',3'-cyclic phosphate + formate + diphosphate + H(+). It participates in cofactor biosynthesis; 5,6,7,8-tetrahydromethanopterin biosynthesis. Its function is as follows. Converts GTP to 7,8-dihydro-D-neopterin 2',3'-cyclic phosphate, the first intermediate in the biosynthesis of coenzyme methanopterin. The chain is GTP cyclohydrolase MptA from Methanoregula boonei (strain DSM 21154 / JCM 14090 / 6A8).